The chain runs to 219 residues: Carbonic anhydrase 1 (219 aa).

Cys-39, Asp-41, His-98, and Cys-101 together coordinate Zn(2+).

It belongs to the beta-class carbonic anhydrase family. As to quaternary structure, oligomer. Zn(2+) serves as cofactor.

It carries out the reaction hydrogencarbonate + H(+) = CO2 + H2O. Reversible hydration of carbon dioxide. Carbon dioxide formed in the bicarbonate-dependent decomposition of cyanate by cyanase (CynS) diffuses out of the cell faster than it would be hydrated to bicarbonate, so the apparent function of this enzyme is to catalyze the hydration of carbon dioxide and thus prevent depletion of cellular bicarbonate. This Escherichia coli O157:H7 protein is Carbonic anhydrase 1 (cynT).